Consider the following 92-residue polypeptide: CRISPR-associated endoribonuclease Cas2 (92 aa).

Asp9 contacts Mg(2+).

This sequence belongs to the CRISPR-associated endoribonuclease Cas2 protein family. As to quaternary structure, homodimer, forms a heterotetramer with a Cas1 homodimer. Mg(2+) is required as a cofactor.

Functionally, CRISPR (clustered regularly interspaced short palindromic repeat), is an adaptive immune system that provides protection against mobile genetic elements (viruses, transposable elements and conjugative plasmids). CRISPR clusters contain sequences complementary to antecedent mobile elements and target invading nucleic acids. CRISPR clusters are transcribed and processed into CRISPR RNA (crRNA). Functions as a ssRNA-specific endoribonuclease. Involved in the integration of spacer DNA into the CRISPR cassette. The sequence is that of CRISPR-associated endoribonuclease Cas2 from Aeropyrum pernix (strain ATCC 700893 / DSM 11879 / JCM 9820 / NBRC 100138 / K1).